The sequence spans 484 residues: Dual specificity protein kinase CLK1 (484 aa).

Residues 1–42 (MRHSKRTYCPDWDDKDWDYGKWRSSSSHKRRKRSHSSAQENK) form a disordered region. Residues 26–35 (SSHKRRKRSH) show a composition bias toward basic residues. At Ser61 the chain carries Phosphoserine. A disordered region spans residues 79–146 (DYTQGCEPGH…RTRSVEDDEE (68 aa)). Residues 86-97 (PGHRQRDHESRY) are compositionally biased toward basic and acidic residues. The segment covering 100 to 112 (HSSKSSGRSGRSS) has biased composition (low complexity). Residues 113 to 138 (YKSKHRIHHSTSHRRSHGKSHRRKRT) are compositionally biased toward basic residues. Thr138 carries the phosphothreonine modification. Ser140 is modified (phosphoserine). Residues 161–477 (YEIVDTLGEG…LREALKHPFF (317 aa)) form the Protein kinase domain. ATP contacts are provided by residues 167-175 (LGEGAFGKV) and Lys191. The Proton acceptor role is filled by Asp288.

This sequence belongs to the protein kinase superfamily. CMGC Ser/Thr protein kinase family. Lammer subfamily. In terms of assembly, interacts with PPIG and UBL5. Post-translationally, autophosphorylates on all three types of residues. Endothelial cells.

It localises to the nucleus. It catalyses the reaction L-seryl-[protein] + ATP = O-phospho-L-seryl-[protein] + ADP + H(+). The catalysed reaction is L-threonyl-[protein] + ATP = O-phospho-L-threonyl-[protein] + ADP + H(+). The enzyme catalyses L-tyrosyl-[protein] + ATP = O-phospho-L-tyrosyl-[protein] + ADP + H(+). Regulates splicing of its own pre-mRNA according to its kinase activity; increased expression of the catalytically active form influences splicing to generate the catalytically inactive splicing variant lacking the kinase domain. Leucettine L41 inhibits its kinase activity and affects the regulation of alternative splicing mediated by phosphorylation of SR proteins. Functionally, dual specificity kinase acting on both serine/threonine and tyrosine-containing substrates. Phosphorylates serine- and arginine-rich (SR) proteins of the spliceosomal complex and may be a constituent of a network of regulatory mechanisms that enable SR proteins to control RNA splicing. Phosphorylates: SRSF1, SRSF3 and PTPN1. Regulates the alternative splicing of tissue factor (F3) pre-mRNA in endothelial cells. The chain is Dual specificity protein kinase CLK1 from Homo sapiens (Human).